A 223-amino-acid polypeptide reads, in one-letter code: Ribosomal RNA small subunit methyltransferase G (223 aa).

Residues Gly-82, Leu-87, Ala-133–Glu-134, and Arg-151 each bind S-adenosyl-L-methionine.

It belongs to the methyltransferase superfamily. RNA methyltransferase RsmG family.

It is found in the cytoplasm. Specifically methylates the N7 position of guanine in position 518 of 16S rRNA. The chain is Ribosomal RNA small subunit methyltransferase G from Corynebacterium glutamicum (strain ATCC 13032 / DSM 20300 / JCM 1318 / BCRC 11384 / CCUG 27702 / LMG 3730 / NBRC 12168 / NCIMB 10025 / NRRL B-2784 / 534).